The sequence spans 969 residues: RNA polymerase-associated protein RapA (969 aa).

The Helicase ATP-binding domain maps to 164–334; the sequence is EVGRRHAPRV…FARLRLLDSD (171 aa). Residue 177 to 184 participates in ATP binding; that stretch reads DEVGLGKT. The DEAH box signature appears at 280 to 283; sequence DEAH. One can recognise a Helicase C-terminal domain in the interval 492 to 668; the sequence is RVNWLLEKLK…GSNEALNDVI (177 aa).

The protein belongs to the SNF2/RAD54 helicase family. RapA subfamily. As to quaternary structure, interacts with the RNAP. Has a higher affinity for the core RNAP than for the holoenzyme. Its ATPase activity is stimulated by binding to RNAP.

Functionally, transcription regulator that activates transcription by stimulating RNA polymerase (RNAP) recycling in case of stress conditions such as supercoiled DNA or high salt concentrations. Probably acts by releasing the RNAP, when it is trapped or immobilized on tightly supercoiled DNA. Does not activate transcription on linear DNA. Probably not involved in DNA repair. The sequence is that of RNA polymerase-associated protein RapA from Vibrio vulnificus (strain YJ016).